The primary structure comprises 77 residues: Acyl carrier protein (77 aa).

A Carrier domain is found at 1-76; it reads MAVFEDVRDV…DVVNYIEKLG (76 aa). The residue at position 36 (serine 36) is an O-(pantetheine 4'-phosphoryl)serine.

The protein belongs to the acyl carrier protein (ACP) family. Post-translationally, 4'-phosphopantetheine is transferred from CoA to a specific serine of apo-ACP by AcpS. This modification is essential for activity because fatty acids are bound in thioester linkage to the sulfhydryl of the prosthetic group.

The protein localises to the cytoplasm. Its pathway is lipid metabolism; fatty acid biosynthesis. Functionally, carrier of the growing fatty acid chain in fatty acid biosynthesis. The chain is Acyl carrier protein from Campylobacter concisus (strain 13826).